The sequence spans 65 residues: Conotoxin Am6.4 (65 aa).

The interval 1–33 is disordered; sequence STGKRNAGKLTVTDDVEADRDTDPDDKDPSVHN. The propeptide occupies 1–36; the sequence is STGKRNAGKLTVTDDVEADRDTDPDDKDPSVHNSWR. Residues 14–26 show a composition bias toward acidic residues; it reads DDVEADRDTDPDD. 3 disulfide bridges follow: cysteine 40–cysteine 50, cysteine 45–cysteine 59, and cysteine 49–cysteine 64.

In terms of processing, is not hydroxylated. Expressed by the venom duct.

It is found in the secreted. Functionally, probable toxin that inhibits ion channels. The polypeptide is Conotoxin Am6.4 (Conus amadis (Amadis cone)).